The sequence spans 249 residues: Basigin (249 aa).

Residues 1–82 (AAGTIQTSVN…VGRSNIVVEG (82 aa)) form the Ig-like C2-type domain. The Extracellular segment spans residues 1–187 (AAGTIQTSVN…MTLRVRSRLA (187 aa)). 2 disulfide bridges follow: cysteine 20-cysteine 66 and cysteine 105-cysteine 165. Residues asparagine 23, asparagine 132, and asparagine 166 are each glycosylated (N-linked (GlcNAc...) asparagine). The Ig-like V-type domain occupies 84-179 (PRIKVGKKSE…TQGSVQEIMT (96 aa)). Residues 188–208 (ALWPFLGIVAEVLVLVTIIFI) traverse the membrane as a helical segment. Residues 209–249 (YEKRRKPDQTLDEDDPGAAPLKGSGHHMNDKDKNVRQRNAT) are Cytoplasmic-facing. The interval 216-249 (DQTLDEDDPGAAPLKGSGHHMNDKDKNVRQRNAT) is disordered. The residue at position 218 (threonine 218) is a Phosphothreonine. Serine 232 carries the post-translational modification Phosphoserine.

In terms of assembly, homooligomer. Interacts with VEGFA, KDR/VEGFR2, PPIA/CYPA, SLC16A12, SLC16A11, ATP1B2, MAG, L1CAM and AJAP1. Interacts with SLC16A3; interaction mediates SLC16A3 targeting to the plasma membrane. Interacts with SLC16A1; interaction mediates SLC16A1 targeting to the plasma membrane. Interacts with PPIL2; regulates BSG transport to the cell membrane. Interacts with XKR8; promoting its localization at the cell membrane. Interacts with SLC16A6; this interaction mediates targeting to the plasma membrane.

It is found in the cell membrane. The protein resides in the endoplasmic reticulum membrane. The protein localises to the basolateral cell membrane. Signaling receptor for cyclophilins, essential for PPIA/CYPA and PPIB/CYPB-dependent signaling related to chemotaxis and adhesion of immune cells. Plays an important role in targeting the monocarboxylate transporters SLC16A1/GLUT1, SLC16A3, SLC16A8, SLC16A11 and SLC16A12 to the plasma membrane. Acts as a coreceptor for vascular endothelial growth factor receptor 2 (KDR/VEGFR2) in endothelial cells enhancing its VEGFA-mediated activation and downstream signaling. Promotes angiogenesis through EPAS1/HIF2A-mediated up-regulation of VEGFA and KDR/VEGFR2 in endothelial cells. The protein is Basigin (BSG) of Cricetulus griseus (Chinese hamster).